Reading from the N-terminus, the 309-residue chain is UDP-N-acetylenolpyruvoylglucosamine reductase (309 aa).

An FAD-binding PCMH-type domain is found at 34–198 (RVGGPAEVMF…VRARLHARPG (165 aa)). Residue arginine 178 is part of the active site. Serine 227 serves as the catalytic Proton donor. Residue glutamate 297 is part of the active site.

It belongs to the MurB family. It depends on FAD as a cofactor.

It localises to the cytoplasm. The catalysed reaction is UDP-N-acetyl-alpha-D-muramate + NADP(+) = UDP-N-acetyl-3-O-(1-carboxyvinyl)-alpha-D-glucosamine + NADPH + H(+). It functions in the pathway cell wall biogenesis; peptidoglycan biosynthesis. Functionally, cell wall formation. The sequence is that of UDP-N-acetylenolpyruvoylglucosamine reductase from Acidiphilium cryptum (strain JF-5).